A 688-amino-acid chain; its full sequence is Sodium channel and clathrin linker 1 (688 aa).

At Ala2 the chain carries N-acetylalanine. Coiled-coil stretches lie at residues 59-108 and 152-673; these read LIAE…AVEK and QTAS…SVIT. Ser681 is subject to Phosphoserine.

As to quaternary structure, interacts with SCN10A and clathrin. Identified in a complex containing SCN10A, clathrin and SCLT1.

It localises to the cytoplasm. Its subcellular location is the cytoskeleton. It is found in the microtubule organizing center. The protein resides in the centrosome. The protein localises to the centriole. Adapter protein that links SCN10A to clathrin. Regulates SCN10A channel activity, possibly by promoting channel internalization. The sequence is that of Sodium channel and clathrin linker 1 (Sclt1) from Mus musculus (Mouse).